Here is a 666-residue protein sequence, read N- to C-terminus: ATP synthase subunit alpha 2 (666 aa).

Residue 182 to 189 participates in ATP binding; it reads GDRATGKT. The segment at 527–666 is disordered; sequence MPAEDAAGDI…DAEAEARHKR (140 aa). Basic and acidic residues predominate over residues 545-590; it reads ARGDADRDADHGANREVSREVSPEASREVSREVSCEVSHEADRDAA. The span at 591–601 shows a compositional bias: low complexity; that stretch reads ADAARVAGRAP. The segment covering 623-641 has biased composition (basic and acidic residues); sequence ADGDRASASRPRPDARGDA.

The protein belongs to the ATPase alpha/beta chains family. In terms of assembly, F-type ATPases have 2 components, CF(1) - the catalytic core - and CF(0) - the membrane proton channel. CF(1) has five subunits: alpha(3), beta(3), gamma(1), delta(1), epsilon(1). CF(0) has three main subunits: a(1), b(2) and c(9-12). The alpha and beta chains form an alternating ring which encloses part of the gamma chain. CF(1) is attached to CF(0) by a central stalk formed by the gamma and epsilon chains, while a peripheral stalk is formed by the delta and b chains.

The protein resides in the cell inner membrane. It catalyses the reaction ATP + H2O + 4 H(+)(in) = ADP + phosphate + 5 H(+)(out). Its function is as follows. Produces ATP from ADP in the presence of a proton gradient across the membrane. The alpha chain is a regulatory subunit. This Burkholderia pseudomallei (strain 1106a) protein is ATP synthase subunit alpha 2.